Here is a 995-residue protein sequence, read N- to C-terminus: Meckelin (995 aa).

A signal peptide spans 1 to 36; the sequence is MATRGGAGVAMAVWSLLSARAVTAFLLLFLPRFLQA. Residues 37–280 form a cysteine-rich region; that stretch reads QTFSFPFQQP…FQFIFENTAG (244 aa). The Extracellular portion of the chain corresponds to 37–519; the sequence is QTFSFPFQQP…SVTYEMDHGE (483 aa). Disulfide bonds link C49–C62, C65–C78, C80–C97, C100–C114, C117–C127, C129–C150, C153–C170, C173–C184, C186–C197, C237–C246, and C253–C268. N141 carries N-linked (GlcNAc...) asparagine glycosylation. An N-linked (GlcNAc...) asparagine glycan is attached at N179. A glycan (N-linked (GlcNAc...) asparagine) is linked at N242. An N-linked (GlcNAc...) asparagine glycan is attached at N318. The cysteines at positions 357 and 378 are disulfide-linked. Residues 520-548 form a helical membrane-spanning segment; it reads AHVQTDIALGVLGGLAVLASLLKTAGWKR. Residues 549 to 558 are Cytoplasmic-facing; the sequence is RIGSPMIDLQ. The chain crosses the membrane as a helical span at residues 559-590; the sequence is TVVKFLVYYAGDLANVFFIITVGTGLYWLIFF. The Extracellular portion of the chain corresponds to 591-603; that stretch reads KAQKSVSVLLPMP. A helical transmembrane segment spans residues 604 to 631; it reads IQEERFVTYVGCAFALKALQFLHKLISQ. Topologically, residues 632-670 are cytoplasmic; the sequence is ITIDVFFIDWERPKGKVLKAVEGEGGVRSATVPVSIWRT. The segment at residues 671–679 is an intramembrane region (helical); the sequence is YFVANEWNE. A discontinuously helical transmembrane segment spans residues 671–701; sequence YFVANEWNEIQTVRKINSLFQVLTVLFFLEV. The stretch at 680–688 is an intramembrane region; sequence IQTVRKINS. The segment at residues 689–701 is an intramembrane region (helical); it reads LFQVLTVLFFLEV. Residues 702–731 lie on the Extracellular side of the membrane; the sequence is VGFKNLALMDSSSSLSRNPPSYIAPYSCIL. Residues 732–757 constitute an intramembrane region (helical); sequence RYAVSAALWLAIGIIQVVFFAVFYER. Residues 732–771 form a discontinuously helical membrane-spanning segment; the sequence is RYAVSAALWLAIGIIQVVFFAVFYERFIEDKIRQFVDLCS. An intramembrane segment occupies 758–762; sequence FIEDK. An intramembrane region (helical) is located at residues 763–771; the sequence is IRQFVDLCS. At 772–926 the chain is on the cytoplasmic side; sequence MSNISVFLLS…SIFYNDEGYS (155 aa). Residues 828–917 adopt a coiled-coil conformation; sequence GQTFEIAISN…MEFMEPMEKS (90 aa). Residues 927–929 constitute an intramembrane region (helical); it reads FSS. A discontinuously helical transmembrane segment spans residues 927–952; sequence FSSVLYYGNEATLLIFDLLFFCVVDL. The stretch at 930–936 is an intramembrane region; it reads VLYYGNE. Positions 937–952 form an intramembrane region, helical; that stretch reads ATLLIFDLLFFCVVDL. Residues 953-957 are Extracellular-facing; sequence ACQNF. A helical transmembrane segment spans residues 958–985; sequence ILASFLTYLQQEIFRYIRNTVGQKNLAS. The Cytoplasmic segment spans residues 986–995; that stretch reads KTLVDQRFLI.

Homodimer. Part of the tectonic-like complex (also named B9 complex). Interacts with DNAJB9, DNAJC10 and mutated SFTPC. Interacts with SYNE2 during the early establishment of cell polarity. Interacts (via C-terminus) with FLNA. Interacts with TMEM218. Interacts with WNT5A. Interacts with ROR2. In terms of tissue distribution, widely expressed in adult and fetal tissues. Expressed at higher level in spinal cord.

The protein localises to the cell membrane. It is found in the endoplasmic reticulum membrane. Its subcellular location is the cell projection. The protein resides in the cilium. It localises to the cytoplasm. The protein localises to the cytoskeleton. It is found in the cilium basal body. Required for ciliary structure and function. Part of the tectonic-like complex which is required for tissue-specific ciliogenesis and may regulate ciliary membrane composition. Involved in centrosome migration to the apical cell surface during early ciliogenesis. Involved in the regulation of cilia length and appropriate number through the control of centrosome duplication. Is a key regulator of stereociliary bundle orientation. Required for epithelial cell branching morphology. Essential for endoplasmic reticulum-associated degradation (ERAD) of surfactant protein C (SFTPC). Involved in the negative regulation of canonical Wnt signaling, and activation of the non-canonical cascade stimulated by WNT5A. In non-canonical Wnt signaling, it may act as ROR2 coreceptor. The sequence is that of Meckelin (TMEM67) from Homo sapiens (Human).